Reading from the N-terminus, the 1021-residue chain is Sodium/potassium-transporting ATPase subunit alpha-1 (1021 aa).

Residues 1-5 (MGKGV) constitute a propeptide that is removed on maturation. Residues 1 to 11 (MGKGVGRDKYE) are compositionally biased toward basic and acidic residues. Positions 1–36 (MGKGVGRDKYEPAAVSEHGDKKKAKKERDMDELKKE) are disordered. The Cytoplasmic portion of the chain corresponds to 4 to 85 (GVGRDKYEPA…NALTPPPTTP (82 aa)). An N6-acetyllysine modification is found at lysine 9. Tyrosine 10 is modified (phosphotyrosine). Serine 16 is subject to Phosphoserine; by PKC. Position 21 is an N6-acetyllysine (lysine 21). A compositionally biased stretch (basic and acidic residues) spans 26–36 (KERDMDELKKE). Phosphoserine occurs at positions 38 and 45. The tract at residues 80 to 82 (PPP) is phosphoinositide-3 kinase binding. Residues 86–106 (EWVKFCRQLFGGFSMLLWIGA) form a helical membrane-spanning segment. Over 107-129 (ILCFLAYGIQAATEEEPQNDNLY) the chain is Extracellular. Residues 130–150 (LGVVLSAVVIITGCFSYYQEA) traverse the membrane as a helical segment. At 151-286 (KSSKIMESFK…GGQTPIAAEI (136 aa)) the chain is on the cytoplasmic side. A disordered region spans residues 214–233 (SSLTGESEPQTRSPDFTNEN). A Phosphoserine modification is found at serine 226. The residue at position 258 (tyrosine 258) is a Phosphotyrosine. The helical transmembrane segment at 287-306 (EHFIHIITGVAVFLGVSFFI) threads the bilayer. At 307-318 (LSLILEYTWLEA) the chain is on the extracellular side. Residues 319-336 (VIFLIGIIVANVPEGLLA) form a helical membrane-spanning segment. The Cytoplasmic segment spans residues 337–770 (TVTVCLTLTA…EEGRLIFDNL (434 aa)). Aspartate 374 acts as the 4-aspartylphosphate intermediate in catalysis. A phosphoserine mark is found at serine 450 and serine 482. Position 485 (lysine 485) interacts with ATP. The residue at position 540 (tyrosine 540) is a Phosphotyrosine. The tract at residues 594–715 (RAAVPDAVGK…QGAIVAVTGD (122 aa)) is mediates interaction with SCN7A. An N6-succinyllysine modification is found at lysine 659. Phosphoserine occurs at positions 666 and 673. Mg(2+) is bound by residues aspartate 715 and aspartate 719. Residues 771 to 790 (KKSIAYTLTSNIPEITPFLI) form a helical membrane-spanning segment. At 791–800 (FIIANIPLPL) the chain is on the extracellular side. Residues 801-821 (GTVTILCIDLGTDMVPAISLA) traverse the membrane as a helical segment. The Cytoplasmic portion of the chain corresponds to 822–841 (YEQAESDIMKRQPRNPKTDK). A helical transmembrane segment spans residues 842 to 864 (LVNERLISMAYGQIGMIQALGGF). The Extracellular portion of the chain corresponds to 865–916 (FTYFVILAENGFLPTHLLGLRVDWDDRWINDVEDSYGQQWTYEQRKIVEFTC). Residues 917–936 (HTAFFVSIVVVQWADLVICK) form a helical membrane-spanning segment. Residues 937–949 (TRRNSVFQQGMKN) lie on the Cytoplasmic side of the membrane. Serine 941 bears the Phosphoserine; by PKA mark. A helical transmembrane segment spans residues 950-968 (KILIFGLFEETALAAFLSY). Residues 969 to 983 (CPGMGVALRMYPLKP) are Extracellular-facing. The chain crosses the membrane as a helical span at residues 984-1004 (TWWFCAFPYSLLIFVYDEVRK). Topologically, residues 1005–1021 (LIIRRRPGGWVEKETYY) are cytoplasmic.

The protein belongs to the cation transport ATPase (P-type) (TC 3.A.3) family. Type IIC subfamily. As to quaternary structure, the sodium/potassium-transporting ATPase is composed of a catalytic alpha subunit, an auxiliary non-catalytic beta subunit and an additional regulatory subunit. Interacts with regulatory subunit FXYD1. Interacts with regulatory subunit FXYD3. Interacts with SIK1. Interacts with SLC35G1 and STIM1. Interacts with CLN3; this interaction regulates the sodium/potassium-transporting ATPase complex localization at the plasma membrane. Interacts with SCN7A; activates ATP1A1 P-type sodium:potassium-exchanging transporter activity which indirectly signals to nearby neurons to regulate sodium homeostasis. In terms of processing, phosphorylation on Tyr-10 modulates pumping activity. Phosphorylation of Ser-941 by PKA modulates the response of ATP1A1 to PKC. Dephosphorylation by protein phosphatase 2A (PP2A) following increases in intracellular sodium, leading to increase catalytic activity.

Its subcellular location is the cell membrane. It is found in the basolateral cell membrane. The protein localises to the sarcolemma. It localises to the cell projection. The protein resides in the axon. Its subcellular location is the melanosome. The enzyme catalyses K(+)(out) + Na(+)(in) + ATP + H2O = K(+)(in) + Na(+)(out) + ADP + phosphate + H(+). In terms of biological role, this is the catalytic component of the active enzyme, which catalyzes the hydrolysis of ATP coupled with the exchange of sodium and potassium ions across the plasma membrane. This action creates the electrochemical gradient of sodium and potassium ions, providing the energy for active transport of various nutrients. Could also be part of an osmosensory signaling pathway that senses body-fluid sodium levels and controls salt intake behavior as well as voluntary water intake to regulate sodium homeostasis. In Canis lupus familiaris (Dog), this protein is Sodium/potassium-transporting ATPase subunit alpha-1 (ATP1A1).